Consider the following 536-residue polypeptide: Feruloyl esterase B (536 aa).

The first 20 residues, 1 to 20, serve as a signal peptide directing secretion; it reads MKTSIVLSIVALFLTSKASA. A CBM10 domain is found at 21–59; sequence DCWSERLGWPCCSDSNAEVIYVDDDGDWGVENNDWCGIQ. Residues 22–59 form a cellulose-binding region; sequence CWSERLGWPCCSDSNAEVIYVDDDGDWGVENNDWCGIQ. Residue Asn65 is glycosylated (N-linked (GlcNAc...) asparagine). A run of 12 repeats spans residues 78–90, 91–103, 104–116, 117–129, 134–146, 151–163, 164–176, 181–193, 194–206, 211–223, 224–236, and 237–249. Residues 78–249 form a 12 X 13 AA repeats of N-Q-G-G-G-M-[PQ]-W-G-D-F-G-G region; the sequence is NQGGGMPWGD…GGMQWGDFGG (172 aa). Over residues 203–252 the composition is skewed to gly residues; that stretch reads DFGGNQGGNQGGGMPWGDFGGNQGGGMQWGDFGGNQGGGMQWGDFGGNQG. A disordered region spans residues 203 to 273; that stretch reads DFGGNQGGNQ…SGPTVEYSTD (71 aa). Residues 257 to 536 form a catalytic region; it reads WGNQGGNSGP…WDFVKQFSLP (280 aa).

Component of the multienzyme cellulase-hemicellulase complex.

It is found in the secreted. The enzyme catalyses feruloyl-polysaccharide + H2O = ferulate + polysaccharide.. With respect to regulation, inhibited by the specific serine esterase inhibitor AEBSF. In terms of biological role, involved in degradation of plant cell walls. Hydrolyzes of the feruloyl-arabinose ester bond in arabinoxylans as well as the feruloyl-galactose and feruloyl-arabinose ester bonds in pectin. The chain is Feruloyl esterase B (ESTA) from Piromyces equi.